The chain runs to 394 residues: Large ribosomal subunit protein mL44 (394 aa).

Residues Met-1–Leu-21 constitute a mitochondrion transit peptide.

It belongs to the ribonuclease III family. Mitochondrion-specific ribosomal protein mL44 subfamily. Component of the mitochondrial large ribosomal subunit (mt-LSU).

Its subcellular location is the mitochondrion. In terms of biological role, component of the mitochondrial ribosome. May have a function in the assembly/stability of nascent mitochondrial polypeptides exiting the ribosome. In Caenorhabditis elegans, this protein is Large ribosomal subunit protein mL44.